Reading from the N-terminus, the 119-residue chain is Large ribosomal subunit protein bL19 (119 aa).

The protein belongs to the bacterial ribosomal protein bL19 family.

In terms of biological role, this protein is located at the 30S-50S ribosomal subunit interface and may play a role in the structure and function of the aminoacyl-tRNA binding site. The sequence is that of Large ribosomal subunit protein bL19 (rplS) from Mycoplasma genitalium (strain ATCC 33530 / DSM 19775 / NCTC 10195 / G37) (Mycoplasmoides genitalium).